A 255-amino-acid chain; its full sequence is Hydroxylmethylpyrimidine kinase (255 aa).

G18, Q43, and N110 together coordinate pyridoxal 5'-phosphate. Q43 lines the 4-amino-5-hydroxymethyl-2-methylpyrimidine pocket. An intrachain disulfide couples C195 to C207. A pyridoxal 5'-phosphate-binding site is contributed by S208.

It belongs to the ThiD family. As to quaternary structure, homodimer. Crystals show a disulfide bond between Cys-195 and Cys-207. This disulfide is possibly an artifact of the purification and crystallization conditions. However, as it is adjacent to the conserved GSGC of the oxyanion hole, this disulfide may help to orient the backbone amides toward the oxanion intermediate.

The enzyme catalyses 4-amino-5-hydroxymethyl-2-methylpyrimidine + ATP = 4-amino-2-methyl-5-(phosphooxymethyl)pyrimidine + ADP + H(+). Its pathway is cofactor biosynthesis; thiamine diphosphate biosynthesis. Inhibited by pyridoxal phosphate at high micromolar concentrations. Functionally, catalyzes the phosphorylation of hydroxymethylpyrimidine (HMP) to hydroxymethylpyrimidine phosphate (HMP-P). Unlike other HMPKs, it cannot catalyze the phosphorylation of HMP-P to generate the diphosphate HMP-PP. Shows no activity with pyridoxal, pyridoxamine or pyridoxine. Does not show phosphatase activity. The polypeptide is Hydroxylmethylpyrimidine kinase (Acinetobacter baumannii (strain IS-123)).